The primary structure comprises 115 residues: Large ribosomal subunit protein bL19 (115 aa).

This sequence belongs to the bacterial ribosomal protein bL19 family.

In terms of biological role, this protein is located at the 30S-50S ribosomal subunit interface and may play a role in the structure and function of the aminoacyl-tRNA binding site. This Streptococcus pyogenes serotype M2 (strain MGAS10270) protein is Large ribosomal subunit protein bL19.